The sequence spans 116 residues: Endoribonuclease toxin ChpB (116 aa).

It belongs to the PemK/MazF family. In terms of assembly, homodimer, interacts with ChpS, which inhibits the endoribonuclease activity.

Stimulated in vitro in a concentration-dependent fashion by extracellular death factor (EDF, a quorum sensing pentapeptide sequence NNWNN, probably produced from the zwf gene product glucose-6-phosphate 1-dehydrogenase), which is able to overcome inhibition by cognate antitoxin ChpS. Toxic component of a type II toxin-antitoxin (TA) system. ChpB is a sequence-specific mRNA and (weak) tmRNA endoribonuclease that inhibits protein synthesis and induces bacterial stasis. Cleavage is independent of the ribosome. Cleavage occurs at ACY sequences where Y is not C. The endoribonuclease activity is not as strong as that of MazF. The endoribonuclease activity (a toxin) is inhibited by its labile cognate antitoxin ChpS. Toxicity results when the levels of ChpS decrease in the cell, leading to mRNA degradation. Both ChpS and ChpB probably bind to the promoter region of the chpS-chpB operon to autoregulate their synthesis. The chain is Endoribonuclease toxin ChpB (chpB) from Escherichia coli (strain K12).